Reading from the N-terminus, the 473-residue chain is MKILYSLRRFYHVETLFNGTFVLAGRDQETTGFAWWAGNARLINLSGKLLGAHVAHAGLIVFWAGAMNLFEVAHFVPEKPMYEQGLILLPHLATLGWGVGPGGEVLDTFPYFVSGVLHLISSAVLGFGGIYHALLGPETLEESFPFFGYVWKDRNKMTTILGIHLILLGLGAFLLVLKALYFGGVYDTWAPGGGDVRKITNLTLSPSVIFGYLLKSPFGGEGWIVSVDDLEDIIGGHVWLGFICVFGGIWHILTKPFAWARRAFVWSGEAYLSYSLAALSVFGFIACCFVWFNNTAYSSEFYGPTGPEASQAQAFTFLVRDQRLGANVGSAQGPTGLGKYLMRSPTGEVIFGGETMRFWDLRAPWLEPLRGPNGLDLSRLKKDIQPWQERRSAEYMTHAPLGSLNSVGGVATEINAVNYVSPRSWLSTSHFVLGFFPFVGHLWHAGRARAAAAGFEKGIDRDLEPVLYMNPLN.

The propeptide occupies Met-1 to Glu-14. The residue at position 15 (Thr-15) is an N-acetylthreonine. The residue at position 15 (Thr-15) is a Phosphothreonine. 5 helical membrane passes run Leu-69 to Ala-93, Leu-134 to Asn-155, Lys-178 to Thr-200, Lys-255 to Ser-275, and Trp-291 to Ala-312. Position 367 (Glu-367) interacts with [CaMn4O5] cluster. The helical transmembrane segment at Arg-447–Pro-471 threads the bilayer.

It belongs to the PsbB/PsbC family. PsbC subfamily. As to quaternary structure, PSII is composed of 1 copy each of membrane proteins PsbA, PsbB, PsbC, PsbD, PsbE, PsbF, PsbH, PsbI, PsbJ, PsbK, PsbL, PsbM, PsbT, PsbX, PsbY, PsbZ, Psb30/Ycf12, at least 3 peripheral proteins of the oxygen-evolving complex and a large number of cofactors. It forms dimeric complexes. The cofactor is Binds multiple chlorophylls and provides some of the ligands for the Ca-4Mn-5O cluster of the oxygen-evolving complex. It may also provide a ligand for a Cl- that is required for oxygen evolution. PSII binds additional chlorophylls, carotenoids and specific lipids.. Post-translationally, phosphorylated on threonine residue(s); phosphorylation increases with increasing light levels.

It localises to the plastid. It is found in the chloroplast thylakoid membrane. In terms of biological role, one of the components of the core complex of photosystem II (PSII). It binds chlorophyll and helps catalyze the primary light-induced photochemical processes of PSII. PSII is a light-driven water:plastoquinone oxidoreductase, using light energy to abstract electrons from H(2)O, generating O(2) and a proton gradient subsequently used for ATP formation. The protein is Photosystem II CP43 reaction center protein of Secale cereale (Rye).